The following is a 200-amino-acid chain: Small ribosomal subunit protein uS4c (200 aa).

One can recognise an S4 RNA-binding domain in the interval 90–150 (MRLDNIIFRL…NRKESVIIKN (61 aa)).

The protein belongs to the universal ribosomal protein uS4 family. In terms of assembly, part of the 30S ribosomal subunit. Contacts protein S5. The interaction surface between S4 and S5 is involved in control of translational fidelity.

Its subcellular location is the plastid. The protein localises to the chloroplast. Its function is as follows. One of the primary rRNA binding proteins, it binds directly to 16S rRNA where it nucleates assembly of the body of the 30S subunit. Functionally, with S5 and S12 plays an important role in translational accuracy. This Pellia neesiana (Liverwort) protein is Small ribosomal subunit protein uS4c (rps4).